The primary structure comprises 257 residues: Thiazole synthase (257 aa).

Lys96 functions as the Schiff-base intermediate with DXP in the catalytic mechanism. Residues Gly157, Ala184–Gly185, and Asn206–Thr207 contribute to the 1-deoxy-D-xylulose 5-phosphate site.

It belongs to the ThiG family. Homotetramer. Forms heterodimers with either ThiH or ThiS.

It is found in the cytoplasm. The catalysed reaction is [ThiS sulfur-carrier protein]-C-terminal-Gly-aminoethanethioate + 2-iminoacetate + 1-deoxy-D-xylulose 5-phosphate = [ThiS sulfur-carrier protein]-C-terminal Gly-Gly + 2-[(2R,5Z)-2-carboxy-4-methylthiazol-5(2H)-ylidene]ethyl phosphate + 2 H2O + H(+). It functions in the pathway cofactor biosynthesis; thiamine diphosphate biosynthesis. Catalyzes the rearrangement of 1-deoxy-D-xylulose 5-phosphate (DXP) to produce the thiazole phosphate moiety of thiamine. Sulfur is provided by the thiocarboxylate moiety of the carrier protein ThiS. In vitro, sulfur can be provided by H(2)S. This is Thiazole synthase from Rhizobium meliloti (strain 1021) (Ensifer meliloti).